Here is a 530-residue protein sequence, read N- to C-terminus: Chaperone Ric-8A (530 aa).

Position 435 is a phosphoserine (Ser-435). Phosphothreonine is present on residues Thr-440 and Thr-442. A phosphoserine mark is found at Ser-501, Ser-522, Ser-523, and Ser-527.

It belongs to the synembryn family. In terms of assembly, interacts with GDP-bound G alpha proteins GNAI1, GNAO1 and GNAQ, and with GNA13 with lower affinity. Does not interact with G-alpha proteins when they are in complex with subunits beta and gamma. Interacts (via C-terminus) with RGS14; the interaction stimulates the dissociation of the complex between RGS14 and the active GTP-bound form of GNAI1. Interacts with NCS1; interaction is favored in the absence of Ca(2+) and myristoylation of NCS1 is not required. Post-translationally, phosphorylated at Ser-435 and Thr-440 by CK2, stabilizing its interface with G alpha proteins.

The protein resides in the cytoplasm. It localises to the cell cortex. Chaperone that specifically binds and folds nascent G alpha proteins prior to G protein heterotrimer formation, promoting their stability and activity: folds GNAI1, GNAO1, GNA13 and GNAQ. Does not fold G(s) G-alpha proteins GNAS nor GNAL. Also acts as a guanine nucleotide exchange factor (GEF) for G alpha proteins by stimulating exchange of bound GDP for free GTP. Involved in regulation of microtubule pulling forces during mitotic movement of chromosomes by stimulating G(i)-alpha protein (GNAI1), possibly leading to release G(i)-alpha-GTP and NuMA proteins from the NuMA-GPSM2-G(i)-alpha-GDP complex. Also acts as an activator for G(q)-alpha (GNAQ) protein by enhancing the G(q)-coupled receptor-mediated ERK activation. The polypeptide is Chaperone Ric-8A (RIC8A) (Pongo abelii (Sumatran orangutan)).